A 521-amino-acid polypeptide reads, in one-letter code: Glutamate--cysteine ligase (521 aa).

The protein belongs to the glutamate--cysteine ligase type 1 family. Type 1 subfamily.

The catalysed reaction is L-cysteine + L-glutamate + ATP = gamma-L-glutamyl-L-cysteine + ADP + phosphate + H(+). Its pathway is sulfur metabolism; glutathione biosynthesis; glutathione from L-cysteine and L-glutamate: step 1/2. The chain is Glutamate--cysteine ligase from Aliivibrio fischeri (strain MJ11) (Vibrio fischeri).